Reading from the N-terminus, the 44-residue chain is Conotoxin S5.1 (44 aa).

Post-translationally, contains 3 disulfide bonds. Expressed by the venom duct.

The protein resides in the secreted. This is Conotoxin S5.1 from Conus striatus (Striated cone).